A 276-amino-acid polypeptide reads, in one-letter code: Formamidopyrimidine-DNA glycosylase (276 aa).

Residue proline 2 is the Schiff-base intermediate with DNA of the active site. Glutamate 3 functions as the Proton donor in the catalytic mechanism. Lysine 58 serves as the catalytic Proton donor; for beta-elimination activity. Histidine 92, arginine 111, and lysine 154 together coordinate DNA. Residues 239-273 (QVYGHAGEECNNCGTILEKIKVNGRGTTFCPHCQV) form an FPG-type zinc finger. Arginine 263 serves as the catalytic Proton donor; for delta-elimination activity.

The protein belongs to the FPG family. Monomer. It depends on Zn(2+) as a cofactor.

The enzyme catalyses Hydrolysis of DNA containing ring-opened 7-methylguanine residues, releasing 2,6-diamino-4-hydroxy-5-(N-methyl)formamidopyrimidine.. It carries out the reaction 2'-deoxyribonucleotide-(2'-deoxyribose 5'-phosphate)-2'-deoxyribonucleotide-DNA = a 3'-end 2'-deoxyribonucleotide-(2,3-dehydro-2,3-deoxyribose 5'-phosphate)-DNA + a 5'-end 5'-phospho-2'-deoxyribonucleoside-DNA + H(+). Involved in base excision repair of DNA damaged by oxidation or by mutagenic agents. Acts as a DNA glycosylase that recognizes and removes damaged bases. Has a preference for oxidized purines, such as 7,8-dihydro-8-oxoguanine (8-oxoG). Has AP (apurinic/apyrimidinic) lyase activity and introduces nicks in the DNA strand. Cleaves the DNA backbone by beta-delta elimination to generate a single-strand break at the site of the removed base with both 3'- and 5'-phosphates. This chain is Formamidopyrimidine-DNA glycosylase, found in Lactobacillus johnsonii (strain CNCM I-12250 / La1 / NCC 533).